The chain runs to 183 residues: Dermatopontin (183 aa).

Pyrrolidone carboxylic acid is present on Gln-1. Sulfotyrosine is present on Tyr-5. Repeat copies occupy residues 8–61, 52–57, 62–117, and 107–112. The 2 X 53-55 AA tandem repeats stretch occupies residues 8 to 117; sequence PYQQYHDYSD…REWQFYCCRY (110 aa). 5 cysteine pairs are disulfide-bonded: Cys-32/Cys-59, Cys-72/Cys-114, Cys-88/Cys-115, Cys-121/Cys-178, and Cys-125/Cys-171. Residues 52-168 are 3 X 6 AA tandem repeats of D-R-[EQ]-W-[NQK]-[FY]; that stretch reads DRQWNYACMP…AVERDRQWKF (117 aa). 4 positions are modified to sulfotyrosine: Tyr-144, Tyr-146, Tyr-148, and Tyr-149. Residues 163–168 form a 2-3 repeat; it reads DRQWKF. Tyr-176 carries the post-translational modification Sulfotyrosine.

It belongs to the dermatopontin family. Interacts with TGFB1, DCN and collagen. Post-translationally, sulfated on tyrosine residue(s). As to expression, detected in skin, skeletal muscle, heart, lung, articular cartilage, long bone and calvaria. Smaller amounts detected in kidney. Not detected in brain, liver or spleen.

The protein resides in the secreted. It is found in the extracellular space. It localises to the extracellular matrix. Functionally, seems to mediate adhesion by cell surface integrin binding. May serve as a communication link between the dermal fibroblast cell surface and its extracellular matrix environment. Enhances TGFB1 activity. Inhibits cell proliferation. Accelerates collagen fibril formation, and stabilizes collagen fibrils against low-temperature dissociation. The polypeptide is Dermatopontin (DPT) (Sus scrofa (Pig)).